A 153-amino-acid polypeptide reads, in one-letter code: NAD(P)H-quinone oxidoreductase subunit N (153 aa).

It belongs to the complex I NdhN subunit family. In terms of assembly, NDH-1 can be composed of about 15 different subunits; different subcomplexes with different compositions have been identified which probably have different functions.

The protein localises to the cellular thylakoid membrane. It catalyses the reaction a plastoquinone + NADH + (n+1) H(+)(in) = a plastoquinol + NAD(+) + n H(+)(out). It carries out the reaction a plastoquinone + NADPH + (n+1) H(+)(in) = a plastoquinol + NADP(+) + n H(+)(out). In terms of biological role, NDH-1 shuttles electrons from an unknown electron donor, via FMN and iron-sulfur (Fe-S) centers, to quinones in the respiratory and/or the photosynthetic chain. The immediate electron acceptor for the enzyme in this species is believed to be plastoquinone. Couples the redox reaction to proton translocation, and thus conserves the redox energy in a proton gradient. Cyanobacterial NDH-1 also plays a role in inorganic carbon-concentration. The polypeptide is NAD(P)H-quinone oxidoreductase subunit N (Synechococcus sp. (strain CC9605)).